Here is a 327-residue protein sequence, read N- to C-terminus: Mitochondrial carnitine carrier (327 aa).

Residues 1-11 show a composition bias toward low complexity; it reads MSSDTSLSESS. The disordered stretch occupies residues 1–29; that stretch reads MSSDTSLSESSLLKEESGSLTKSRPPIKS. 6 consecutive transmembrane segments (helical) span residues 33-49, 107-123, 141-162, 196-212, 244-260, and 293-313; these read RENI…GVCA, LGVT…YDVG, MGQM…TAPT, GSLA…ALYF, LAGG…VFPI, and FFPG…ATFL. 3 Solcar repeats span residues 33 to 126, 139 to 221, and 237 to 321; these read RENI…GKKL, LTMG…SKNY, and VNIL…THSL.

The protein belongs to the mitochondrial carrier (TC 2.A.29) family.

It localises to the mitochondrion inner membrane. Transports carnitine, acetylcarnitine, propionylcarnitine and to a much lower extent medium- and long-chain acylcarnitines. The sequence is that of Mitochondrial carnitine carrier (CRC1) from Saccharomyces cerevisiae (strain ATCC 204508 / S288c) (Baker's yeast).